The chain runs to 371 residues: Ferrochelatase (371 aa).

2 residues coordinate Fe cation: H218 and E299.

This sequence belongs to the ferrochelatase family.

The protein resides in the cytoplasm. The enzyme catalyses heme b + 2 H(+) = protoporphyrin IX + Fe(2+). The protein operates within porphyrin-containing compound metabolism; protoheme biosynthesis; protoheme from protoporphyrin-IX: step 1/1. Catalyzes the ferrous insertion into protoporphyrin IX. This Cupriavidus necator (strain ATCC 17699 / DSM 428 / KCTC 22496 / NCIMB 10442 / H16 / Stanier 337) (Ralstonia eutropha) protein is Ferrochelatase.